Reading from the N-terminus, the 200-residue chain is Flavin prenyltransferase UbiX (200 aa).

FMN-binding positions include 15–17 (GAS), Thr-41, 102–105 (SMGT), and Arg-137. Tyr-167 and Lys-183 together coordinate dimethylallyl phosphate.

Belongs to the UbiX/PAD1 family.

It catalyses the reaction dimethylallyl phosphate + FMNH2 = prenylated FMNH2 + phosphate. Its function is as follows. Flavin prenyltransferase that catalyzes the synthesis of the prenylated FMN cofactor (prenyl-FMN) for 4-hydroxy-3-polyprenylbenzoic acid decarboxylase UbiD. The prenyltransferase is metal-independent and links a dimethylallyl moiety from dimethylallyl monophosphate (DMAP) to the flavin N5 and C6 atoms of FMN. This is Flavin prenyltransferase UbiX from Alkalihalophilus pseudofirmus (strain ATCC BAA-2126 / JCM 17055 / OF4) (Bacillus pseudofirmus).